We begin with the raw amino-acid sequence, 274 residues long: Pyrroline-5-carboxylate reductase 3 (274 aa).

Alanine 2 is subject to N-acetylalanine.

Belongs to the pyrroline-5-carboxylate reductase family. Homodecamer; composed of 5 homodimers.

The protein localises to the cytoplasm. The enzyme catalyses L-proline + NADP(+) = (S)-1-pyrroline-5-carboxylate + NADPH + 2 H(+). It carries out the reaction L-proline + NAD(+) = (S)-1-pyrroline-5-carboxylate + NADH + 2 H(+). The protein operates within amino-acid biosynthesis; L-proline biosynthesis; L-proline from L-glutamate 5-semialdehyde: step 1/1. In terms of biological role, oxidoreductase that catalyzes the last step in proline biosynthesis, which corresponds to the reduction of pyrroline-5-carboxylate (P5C) to L-proline using NAD(P)H. Proline is synthesized from either glutamate or ornithine; both are converted to P5C, and then to proline via pyrroline-5-carboxylate reductases (PYCRs). PYCR3 is exclusively linked to the biosynthesis of proline from ornithine. The polypeptide is Pyrroline-5-carboxylate reductase 3 (Macaca fascicularis (Crab-eating macaque)).